The primary structure comprises 215 residues: Adenylate kinase (215 aa).

10–15 contributes to the ATP binding site; sequence GAGKGT. Positions 30–59 are NMP; that stretch reads STGDMLRAAVKAGTPIGLKAKAVMEAGELV. AMP is bound by residues Thr31, Arg36, 57-59, 85-88, and Gln92; these read ELV and GYPR. Residues 126 to 163 form an LID region; it reads GRYTCANCGEGYHDRFKQPKVAGVCDVCGSAEFKRRPD. Arg127 provides a ligand contact to ATP. Zn(2+)-binding residues include Cys130, Cys133, Cys150, and Cys153. Positions 160 and 172 each coordinate AMP. Ala200 is a binding site for ATP.

It belongs to the adenylate kinase family. Monomer.

The protein localises to the cytoplasm. It carries out the reaction AMP + ATP = 2 ADP. It participates in purine metabolism; AMP biosynthesis via salvage pathway; AMP from ADP: step 1/1. Its function is as follows. Catalyzes the reversible transfer of the terminal phosphate group between ATP and AMP. Plays an important role in cellular energy homeostasis and in adenine nucleotide metabolism. The polypeptide is Adenylate kinase (Rhizorhabdus wittichii (strain DSM 6014 / CCUG 31198 / JCM 15750 / NBRC 105917 / EY 4224 / RW1) (Sphingomonas wittichii)).